We begin with the raw amino-acid sequence, 410 residues long: Peptidase T (410 aa).

Residue His79 coordinates Zn(2+). The active site involves Asp81. Asp142 contributes to the Zn(2+) binding site. Residue Glu176 is the Proton acceptor of the active site. Residues Glu177, Asp199, and His381 each contribute to the Zn(2+) site.

This sequence belongs to the peptidase M20B family. Requires Zn(2+) as cofactor.

It localises to the cytoplasm. The enzyme catalyses Release of the N-terminal residue from a tripeptide.. Cleaves the N-terminal amino acid of tripeptides. This is Peptidase T from Listeria innocua serovar 6a (strain ATCC BAA-680 / CLIP 11262).